A 1395-amino-acid chain; its full sequence is DNA polymerase II large subunit (1395 aa).

2 disordered regions span residues 279-320 (IGKD…PRVE) and 657-704 (GNRM…MSDT). The segment covering 283-312 (EADEGDSAEDANGDDAGEGADDDGGDEADE) has biased composition (acidic residues). 2 stretches are compositionally biased toward basic and acidic residues: residues 661-671 (GRPEKSERRDL) and 690-700 (DVAKATKHADD).

The protein belongs to the archaeal DNA polymerase II family. In terms of assembly, heterodimer of a large subunit and a small subunit. In terms of processing, this protein undergoes a protein self splicing that involves a post-translational excision of the intervening region (intein) followed by peptide ligation.

It catalyses the reaction DNA(n) + a 2'-deoxyribonucleoside 5'-triphosphate = DNA(n+1) + diphosphate. The catalysed reaction is Exonucleolytic cleavage in the 3'- to 5'-direction to yield nucleoside 5'-phosphates.. Its function is as follows. Possesses two activities: a DNA synthesis (polymerase) and an exonucleolytic activity that degrades single-stranded DNA in the 3'- to 5'-direction. Has a template-primer preference which is characteristic of a replicative DNA polymerase. This is DNA polymerase II large subunit from Haloarcula marismortui (strain ATCC 43049 / DSM 3752 / JCM 8966 / VKM B-1809) (Halobacterium marismortui).